A 332-amino-acid polypeptide reads, in one-letter code: Torsin-1A (332 aa).

The first 20 residues, 1-20 (MKLGRAVLGLLLLAPSVVQA), serve as a signal peptide directing secretion. The tract at residues 91–251 (KPKKPLTLSL…VSVFNNKNSG (161 aa)) is interaction with SNAPIN. Residue 102–109 (GWTGTGKN) coordinates ATP. Asn-143 and Asn-158 each carry an N-linked (GlcNAc...) (high mannose) asparagine glycan. The interval 251-332 (GFWHSSLIDR…FTKLDYYYDD (82 aa)) is interaction with KLC1. Residues 312–332 (RVFSDKGCKTVFTKLDYYYDD) form an interaction with SYNE3 region.

Belongs to the ClpA/ClpB family. Torsin subfamily. As to quaternary structure, homohexamer. Interacts with TOR1B; the interaction may be specific of neural tissues. Interacts (ATP-bound) with TOR1AIP1 and TOR1AIP2; the interactions induce ATPase activity. Interacts with KLHL14; preferentially when ATP-free. Interacts with KLC1 (via TPR repeats); the interaction associates TOR1A with the kinesin oligomeric complex. Interacts with COPS4; the interaction associates TOR1A with the CSN complex. Interacts with SNAPIN; the interaction is direct and associates SNAPIN with the CSN complex. Interacts with STON2. Interacts (ATP-bound) with SYNE3 (via KASH domain); the interaction is required for SYNE3 nuclear envelope localization. Interacts with VIM; the interaction associates TOR1A with the cytoskeleton. Interacts with PLEC. Interacts (ATP-bound) with SLC6A3; regulates SLC6A3 transport to the plasma membrane. In terms of processing, N-glycosylated. As to expression, widely expressed. Highest levels in kidney and liver. In the brain, high levels found in the dopaminergic neurons of the substantia nigra pars compacta, as well as in the neocortex, hippocampus and cerebellum. Also highly expressed in the spinal cord.

It is found in the endoplasmic reticulum lumen. Its subcellular location is the nucleus membrane. The protein localises to the cell projection. It localises to the growth cone. The protein resides in the cytoplasmic vesicle membrane. It is found in the cytoplasmic vesicle. Its subcellular location is the secretory vesicle. The protein localises to the synaptic vesicle. It localises to the cytoplasm. The protein resides in the cytoskeleton. It carries out the reaction ATP + H2O = ADP + phosphate + H(+). Its function is as follows. Protein with chaperone functions important for the control of protein folding, processing, stability and localization as well as for the reduction of misfolded protein aggregates. Involved in the regulation of synaptic vesicle recycling, controls STON2 protein stability in collaboration with the COP9 signalosome complex (CSN). In the nucleus, may link the cytoskeleton with the nuclear envelope, this mechanism seems to be crucial for the control of nuclear polarity, cell movement and, specifically in neurons, nuclear envelope integrity. Participates in the cellular trafficking and may regulate the subcellular location of multipass membrane proteins such as the dopamine transporter SLC6A3, leading to the modulation of dopamine neurotransmission. In the endoplasmic reticulum, plays a role in the quality control of protein folding by increasing clearance of misfolded proteins such as SGCE variants or holding them in an intermediate state for proper refolding. May have a redundant function with TOR1B in non-neural tissues. The chain is Torsin-1A (TOR1A) from Homo sapiens (Human).